The primary structure comprises 117 residues: MKWLLWLGYIFSFGLLYLWIVKKSKQIAQQPNTKLVESTSIPFKVKDFVSACGGKENFVNIKTTPTQLIVTFKDVNSVSLTKLNALNIKGINKNQNQFRFVLGNFVNELKKKIEDEQ.

Residues 1–21 (MKWLLWLGYIFSFGLLYLWIV) form a helical membrane-spanning segment. The 76-residue stretch at 42–117 (PFKVKDFVSA…ELKKKIEDEQ (76 aa)) folds into the PTS EIIB type-1 domain.

Its subcellular location is the membrane. Its function is as follows. The phosphoenolpyruvate-dependent sugar phosphotransferase system (PTS), a major carbohydrate active -transport system, catalyzes the phosphorylation of incoming sugar substrates concomitant with their translocation across the cell membrane. The chain is Putative phosphotransferase enzyme IIB component MG129 from Mycoplasma genitalium (strain ATCC 33530 / DSM 19775 / NCTC 10195 / G37) (Mycoplasmoides genitalium).